A 151-amino-acid chain; its full sequence is Macrodomain Ter protein (151 aa).

This sequence belongs to the MatP family. In terms of assembly, homodimer.

The protein localises to the cytoplasm. Functionally, required for spatial organization of the terminus region of the chromosome (Ter macrodomain) during the cell cycle. Prevents early segregation of duplicated Ter macrodomains during cell division. Binds specifically to matS, which is a 13 bp signature motif repeated within the Ter macrodomain. This Vibrio atlanticus (strain LGP32) (Vibrio splendidus (strain Mel32)) protein is Macrodomain Ter protein.